The following is a 783-amino-acid chain: Flavin carrier protein 2 (783 aa).

An N-terminal signal peptide occupies residues 1–22 (MIFLNTFARCLLTCFVLCSGTA). Residues 23-182 (RSSDTNDTTP…NGKTVQTKYA (160 aa)) lie on the Lumenal side of the membrane. N-linked (GlcNAc...) asparagine glycosylation is found at N28, N65, N81, and N156. The chain crosses the membrane as a helical span at residues 183–203 (AWPIAAISGVGVLTSGFVSVI). At 204 to 211 (GYSATAAH) the chain is on the cytoplasmic side. The chain crosses the membrane as a helical span at residues 212 to 232 (IASNSISLFIYFQNLAITAMM). Residues 233-347 (GVSRVPPIAA…AYLANIELSN (115 aa)) lie on the Lumenal side of the membrane. N-linked (GlcNAc...) asparagine glycosylation occurs at N323. The chain crosses the membrane as a helical span at residues 348–368 (FFLTGIVFFLFFLFVVVVSLI). Residues 369-402 (FFKALLEVLTRARILKETSNFFQYRKNWGSIIKG) lie on the Cytoplasmic side of the membrane. The helical transmembrane segment at 403–423 (TLFRLSIIAFPQVSLLAIWEF) threads the bilayer. Residues 424-430 (TQVNSPA) are Lumenal-facing. A helical membrane pass occupies residues 431–451 (IVVDAVVILLIITGLLVYGTI). Topologically, residues 452–492 (RVFIKGRESLRLYKNPAYLLYSDTYFLNKFGFLYVQFKADK) are cytoplasmic. The chain crosses the membrane as a helical span at residues 493-513 (FWWLLPLLSYAFLRSLFVAVL). Topologically, residues 514 to 521 (QNQGKAQA) are lumenal. The chain crosses the membrane as a helical span at residues 522-542 (MIIFVIELAYFVCLCWIRPYL). Over 543 to 547 (DKRTN) the chain is Cytoplasmic. Residues 548–568 (VFNIAIHLVNLINAFFFLFFS) traverse the membrane as a helical segment. Over 569–581 (NLFKQPAVVSSVM) the chain is Lumenal. A helical membrane pass occupies residues 582-602 (AVILFVLNAVFALFLLLFTIV). Over 603–783 (TCTLALLHRN…ENARNNNPYL (181 aa)) the chain is Cytoplasmic. Residues 681-783 (RLFDDETSSS…ENARNNNPYL (103 aa)) are disordered. Positions 688-697 (SSSSFKQNSS) are enriched in low complexity. Polar residues-rich tracts occupy residues 704–748 (VTEQ…TSSL) and 756–767 (YLGNSNKSYSHF). The segment covering 768–783 (NNNGSNENARNNNPYL) has biased composition (low complexity).

It belongs to the transient receptor potential (TRP) ion channel family.

It localises to the endoplasmic reticulum membrane. In terms of biological role, may be responsible for the transport of FAD into the endoplasmic reticulum lumen, where it is required for oxidative protein folding. In Saccharomyces cerevisiae (strain ATCC 204508 / S288c) (Baker's yeast), this protein is Flavin carrier protein 2 (FLC2).